A 457-amino-acid chain; its full sequence is Acetylcholine receptor subunit alpha (457 aa).

The first 20 residues, 1–20 (MEPRPLLLLLGLCSAGLVLG), serve as a signal peptide directing secretion. Residues 21–230 (SEHETRLVAK…ITYHFVMQRL (210 aa)) are Extracellular-facing. Cystine bridges form between Cys-148/Cys-162 and Cys-212/Cys-213. An N-linked (GlcNAc...) asparagine glycan is attached at Asn-161. Transmembrane regions (helical) follow at residues 231–255 (PLYF…VFYL), 263–281 (MTLS…LVIV), and 297–316 (YMLF…VIVI). The Cytoplasmic segment spans residues 317 to 428 (NTHHRSPSTH…WKYVAMVMDH (112 aa)). The chain crosses the membrane as a helical span at residues 429-447 (ILLAVFMLVCIIGTLAVFA).

This sequence belongs to the ligand-gated ion channel (TC 1.A.9) family. Acetylcholine receptor (TC 1.A.9.1) subfamily. Alpha-1/CHRNA1 sub-subfamily. One of the alpha chains that assemble within the acetylcholine receptor, a pentamer of two alpha chains, a beta, a delta, and a gamma (in immature muscle) or epsilon (in mature muscle) chains. The muscle heteropentamer composed of alpha-1, beta-1, delta, epsilon subunits interacts with the alpha-conotoxin ImII.

It localises to the postsynaptic cell membrane. The protein resides in the cell membrane. The catalysed reaction is K(+)(in) = K(+)(out). The enzyme catalyses Na(+)(in) = Na(+)(out). Upon acetylcholine binding, the AChR responds by an extensive change in conformation that affects all subunits and leads to opening of an ion-conducting channel across the plasma membrane. In Bos taurus (Bovine), this protein is Acetylcholine receptor subunit alpha (CHRNA1).